Reading from the N-terminus, the 359-residue chain is Dihydroorotate dehydrogenase (quinone) (359 aa).

Residues 65-69 (AGLDK) and Thr89 each bind FMN. Lys69 provides a ligand contact to substrate. Substrate is bound at residue 114–118 (NRLGF). Residues Asn149 and Asn182 each coordinate FMN. Substrate is bound at residue Asn182. The Nucleophile role is filled by Ser185. Residue Asn187 coordinates substrate. Residues Lys233 and Thr261 each coordinate FMN. Residue 262-263 (NT) participates in substrate binding. Residues Gly284, Gly313, and 334–335 (YT) contribute to the FMN site.

Belongs to the dihydroorotate dehydrogenase family. Type 2 subfamily. In terms of assembly, monomer. The cofactor is FMN.

The protein localises to the cell membrane. It carries out the reaction (S)-dihydroorotate + a quinone = orotate + a quinol. The protein operates within pyrimidine metabolism; UMP biosynthesis via de novo pathway; orotate from (S)-dihydroorotate (quinone route): step 1/1. Catalyzes the conversion of dihydroorotate to orotate with quinone as electron acceptor. The protein is Dihydroorotate dehydrogenase (quinone) of Paracidovorax citrulli (strain AAC00-1) (Acidovorax citrulli).